A 128-amino-acid chain; its full sequence is Small ribosomal subunit protein uS11 (128 aa).

It belongs to the universal ribosomal protein uS11 family. As to quaternary structure, part of the 30S ribosomal subunit. Interacts with proteins S7 and S18. Binds to IF-3.

Its function is as follows. Located on the platform of the 30S subunit, it bridges several disparate RNA helices of the 16S rRNA. Forms part of the Shine-Dalgarno cleft in the 70S ribosome. The polypeptide is Small ribosomal subunit protein uS11 (Aster yellows witches'-broom phytoplasma (strain AYWB)).